A 91-amino-acid polypeptide reads, in one-letter code: Small integral membrane protein 12-A (91 aa).

Residues 12–34 (YAPYITFPVAFVVGAVGYQLEWF) form a helical membrane-spanning segment.

The protein belongs to the SMIM12 family.

It is found in the membrane. This chain is Small integral membrane protein 12-A (smim12-a), found in Xenopus laevis (African clawed frog).